The primary structure comprises 167 residues: uncharacterized protein (167 aa).

It localises to the mitochondrion. This is an uncharacterized protein from Marchantia polymorpha (Common liverwort).